The chain runs to 246 residues: Sensory transduction protein LytT (246 aa).

The Response regulatory domain occupies 3-117; it reads KVLVVDDEML…RIVQTLKKYK (115 aa). 4-aspartylphosphate is present on Asp54. The 105-residue stretch at 142-246 folds into the HTH LytTR-type domain; it reads LALPIEESIV…AKELKKLLRI (105 aa).

In terms of processing, phosphorylated by LytS.

The protein localises to the cytoplasm. Member of the two-component regulatory system LytS/LytT that probably regulates genes involved in cell wall metabolism. The polypeptide is Sensory transduction protein LytT (lytT) (Bacillus anthracis).